A 349-amino-acid chain; its full sequence is Ion-translocating oxidoreductase complex subunit D (349 aa).

Helical transmembrane passes span 20–42, 77–99, and 124–144; these read VMQR…FGWG, SAML…WMIV, and AMAA…TWIA. T185 carries the FMN phosphoryl threonine modification. Transmembrane regions (helical) follow at residues 212-232, 239-259, 265-285, 291-311, and 315-335; these read STGV…LVLL, WHIS…GFLL, ASPL…FIAT, ATSS…VYII, and GGYP…APFI.

This sequence belongs to the NqrB/RnfD family. In terms of assembly, the complex is composed of six subunits: RnfA, RnfB, RnfC, RnfD, RnfE and RnfG. FMN is required as a cofactor.

The protein resides in the cell inner membrane. Part of a membrane-bound complex that couples electron transfer with translocation of ions across the membrane. This Shewanella baltica (strain OS223) protein is Ion-translocating oxidoreductase complex subunit D.